The primary structure comprises 417 residues: NADH-quinone oxidoreductase subunit D (417 aa).

It belongs to the complex I 49 kDa subunit family. As to quaternary structure, NDH-1 is composed of 14 different subunits. Subunits NuoB, C, D, E, F, and G constitute the peripheral sector of the complex.

It is found in the cell inner membrane. It carries out the reaction a quinone + NADH + 5 H(+)(in) = a quinol + NAD(+) + 4 H(+)(out). NDH-1 shuttles electrons from NADH, via FMN and iron-sulfur (Fe-S) centers, to quinones in the respiratory chain. The immediate electron acceptor for the enzyme in this species is believed to be ubiquinone. Couples the redox reaction to proton translocation (for every two electrons transferred, four hydrogen ions are translocated across the cytoplasmic membrane), and thus conserves the redox energy in a proton gradient. This chain is NADH-quinone oxidoreductase subunit D, found in Aromatoleum aromaticum (strain DSM 19018 / LMG 30748 / EbN1) (Azoarcus sp. (strain EbN1)).